The following is a 369-amino-acid chain: MELATTGKVNEVLFMNRGEGESSYAQNSSFTQQVASMATPALENAVETLFSKDFHLQALNAVDLGCAAGPNTFAVISTIKRMMEKKCRELNCQTLELQVYLNDLFGNDFNTLFKGLSSEVIGNKCEEVPCYVMGVPGSFHGRLFPRNSLHLVHSSYSVHWLTQAPKGLTNREGLALNKGKIYISKTSPPIVREAYLTQFHEDFTMFLNARSQEVVPNGCMVLILRSRQSSDPSDMQSCFTWELLAKAIAELVSQGLIDEDKLDAFNIPCYFPSLEEVKDIVERDGSFTIDHMEGFGLDSLQMEENDKWVRGEKFTKVVRAFTEPIISNQFGHEIMDKLYDKFTHIVVSDFEAKLPKTTSIILVLSKIDG.

Residue Tyr-24 coordinates S-adenosyl-L-homocysteine. Residue Thr-31 coordinates caffeine. 6 residues coordinate S-adenosyl-L-homocysteine: Cys-66, Asn-71, Asp-103, Leu-104, Ser-138, and Phe-139. Residues Tyr-156, His-159, and Trp-160 each contribute to the caffeine site. Asn-177 provides a ligand contact to Mg(2+). Caffeine is bound at residue Arg-225. Mg(2+)-binding residues include Asp-263, Phe-265, and Asn-266. Phe-321 serves as a coordination point for caffeine.

Belongs to the methyltransferase superfamily. Type-7 methyltransferase family. The cofactor is Mg(2+).

The enzyme catalyses theobromine + S-adenosyl-L-methionine = caffeine + S-adenosyl-L-homocysteine + H(+). The catalysed reaction is 7-methylxanthine + S-adenosyl-L-methionine = theobromine + S-adenosyl-L-homocysteine + H(+). It participates in alkaloid biosynthesis. Its function is as follows. Involved in the biosynthesis of caffeine. Catalyzes the conversion of 7-methylxanthine (7mX) to theobromine and of theobromine to caffeine. The polypeptide is Caffeine synthase 1 (Camellia taliensis (Wild tea)).